Consider the following 521-residue polypeptide: Beta-glucosidase 11 (521 aa).

The N-terminal stretch at 1 to 23 (MKLLSNSLMFLPLLALALTAVSS) is a signal peptide. Residues glutamine 45, histidine 144, and 189 to 190 (NE) each bind a beta-D-glucoside. Glutamate 190 (proton donor) is an active-site residue. A disulfide bond links cysteine 209 and cysteine 217. Asparagine 216 and asparagine 221 each carry an N-linked (GlcNAc...) asparagine glycan. Tyrosine 356 is a binding site for a beta-D-glucoside. N-linked (GlcNAc...) asparagine glycosylation is found at asparagine 364 and asparagine 388. A beta-D-glucoside-binding residues include glutamate 422, tryptophan 466, and phenylalanine 482. Residue glutamate 422 is the Nucleophile of the active site.

Belongs to the glycosyl hydrolase 1 family.

It carries out the reaction Hydrolysis of terminal, non-reducing beta-D-glucosyl residues with release of beta-D-glucose.. In Arabidopsis thaliana (Mouse-ear cress), this protein is Beta-glucosidase 11.